The following is a 110-amino-acid chain: MPELKTVGLFLITALAEIAGCYLAYLWLREDKTIWLLVPCALSLVAFVWLLSLHPTAAGRVYAAYGGVYIVMAILWLWVVNGIRPTTWDLVGSAIALLGMAIIMFAPRTT.

Helical transmembrane passes span 7-27, 33-53, 63-83, and 87-107; these read VGLF…AYLW, TIWL…LLSL, AAYG…VNGI, and TWDL…MFAP.

This sequence belongs to the UPF0060 family.

The protein localises to the cell inner membrane. This Nitrosococcus oceani (strain ATCC 19707 / BCRC 17464 / JCM 30415 / NCIMB 11848 / C-107) protein is UPF0060 membrane protein Noc_2955.